We begin with the raw amino-acid sequence, 127 residues long: Aspartate 1-decarboxylase (127 aa).

Serine 25 serves as the catalytic Schiff-base intermediate with substrate; via pyruvic acid. The residue at position 25 (serine 25) is a Pyruvic acid (Ser). A substrate-binding site is contributed by threonine 57. The active-site Proton donor is the tyrosine 58. 73-75 (GAA) is a substrate binding site.

The protein belongs to the PanD family. Heterooctamer of four alpha and four beta subunits. Pyruvate is required as a cofactor. In terms of processing, is synthesized initially as an inactive proenzyme, which is activated by self-cleavage at a specific serine bond to produce a beta-subunit with a hydroxyl group at its C-terminus and an alpha-subunit with a pyruvoyl group at its N-terminus.

The protein localises to the cytoplasm. It carries out the reaction L-aspartate + H(+) = beta-alanine + CO2. It functions in the pathway cofactor biosynthesis; (R)-pantothenate biosynthesis; beta-alanine from L-aspartate: step 1/1. Catalyzes the pyruvoyl-dependent decarboxylation of aspartate to produce beta-alanine. This is Aspartate 1-decarboxylase from Trichormus variabilis (strain ATCC 29413 / PCC 7937) (Anabaena variabilis).